We begin with the raw amino-acid sequence, 3431 residues long: KICSTOR complex protein SZT2 (3431 aa).

Disordered regions lie at residues 699–731 (SKEPTPKVKRKGLGGVGGSSPSKSPPTLGPQQA), 1067–1101 (LRDPGPEGPPVGGHAVAKDRAGNSTQASGDSTLPS), and 1162–1231 (KPKL…GADG). The tract at residues 1082–1188 (VAKDRAGNST…ATGTKATESQ (107 aa)) is mediates interaction with the GATOR1 complex. Composition is skewed to polar residues over residues 1088–1101 (GNSTQASGDSTLPS) and 1182–1212 (TKATESQVPTLSVTLASDSAQDSGEPSTPSC). Serine 1275 is modified (phosphoserine). Positions 1356–1378 (PPSPGPLSPGPFSSSIEEGPEPR) are disordered. Position 1415 is a phosphoserine (serine 1415). 7 disordered regions span residues 1512–1534 (YRESREPDLGPAGLDSASLSDAD), 1629–1678 (PPAS…HPGL), 1806–1883 (RAED…PGET), 2113–2148 (PPSLALSRSQEPISSEDSVAPRSPLDMASSRSSDAV), 2450–2512 (TEAG…LEEG), 2735–2756 (ASPPLSREQGRLSGSSRGGGPL), and 2866–2899 (ETCAPSEGQRRPCPESGSGSREVPTSCESLDVPP). Position 1640 is a phosphothreonine (threonine 1640). Residues 1641–1657 (SESSASFPRSPGQPSSL) show a composition bias toward polar residues. At serine 1650 the chain carries Phosphoserine. Residues 1832–1854 (PLISLPSLSQGGSQPGPSRGLSL) are compositionally biased toward low complexity. Residues 2118–2129 (LSRSQEPISSED) are compositionally biased toward polar residues. Positions 2460-2473 (TTDDIVLDRPEDTR) are enriched in basic and acidic residues. Positions 2739–2749 (LSREQGRLSGS) are enriched in low complexity.

As to quaternary structure, part of the KICSTOR complex composed of KPTN, ITFG2, KICS2 and SZT2. SZT2 probably serves as a link between the other three proteins in the KICSTOR complex and may mediate the direct interaction with the GATOR complex via GATOR1. The KICSTOR complex interacts directly with the GATOR1 complex and most probably indirectly with the GATOR2 complex in an amino acid-independent manner. In terms of tissue distribution, mostly expressed in brain, spinal cord and lung.

Its subcellular location is the lysosome membrane. It localises to the peroxisome. Its function is as follows. As part of the KICSTOR complex functions in the amino acid-sensing branch of the TORC1 signaling pathway. Recruits, in an amino acid-independent manner, the GATOR1 complex to the lysosomal membranes and allows its interaction with GATOR2 and the RAG GTPases. Functions upstream of the RAG GTPases and is required to negatively regulate mTORC1 signaling in absence of amino acids. In absence of the KICSTOR complex mTORC1 is constitutively localized to the lysosome and activated. The KICSTOR complex is also probably involved in the regulation of mTORC1 by glucose. May play a role in the cellular response to oxidative stress. This chain is KICSTOR complex protein SZT2, found in Mus musculus (Mouse).